Here is a 287-residue protein sequence, read N- to C-terminus: Melatonin receptor type 1B-A (287 aa).

Topologically, residues 1 to 28 (MPENVSLIRNRTEVGQGRAWGSGAGARP) are extracellular. Residues Asn4 and Asn10 are each glycosylated (N-linked (GlcNAc...) asparagine). A helical membrane pass occupies residues 29 to 49 (AWVVMVLAGVLIFTSVVDVLG). Topologically, residues 50-69 (NVLVIISVLRNRKLRNAGNA) are cytoplasmic. Residues 70–90 (FVVSLAFADLLVVCYPYPLVL) traverse the membrane as a helical segment. The Extracellular segment spans residues 91-107 (HAMLHAGWLPGEMECKV). Cys105 and Cys182 are oxidised to a cystine. Residues 108 to 128 (SGFLMGASVIGSIFNITAIAI) traverse the membrane as a helical segment. Over 129–149 (NRYCFICQANTYEKIYGRAGT) the chain is Cytoplasmic. A helical membrane pass occupies residues 150 to 170 (LVLLTLVWVLTAIAILPNLSL). Over 171-192 (GSLTYDPRVYSCTFSQTTSAGY) the chain is Extracellular. Residues 193–213 (TIAVVTVHFLLPIAVVTFCYL) form a helical membrane-spanning segment. The Cytoplasmic segment spans residues 214 to 245 (RIWVLVLRVRRRVTTDVRPRLRPSELRHFLTM). A helical membrane pass occupies residues 246 to 266 (FVVFVLFAVCWAPLNLIGLAV). Topologically, residues 267–275 (AVDPPRVGP) are extracellular. The helical transmembrane segment at 276-287 (LVPDWLFVMSYF) threads the bilayer.

Belongs to the G-protein coupled receptor 1 family.

It is found in the cell membrane. In terms of biological role, high affinity receptor for melatonin. The activity of this receptor is mediated by pertussis toxin sensitive G proteins that inhibits adenylate cyclase activity. This chain is Melatonin receptor type 1B-A (mtnr1ba), found in Danio rerio (Zebrafish).